The sequence spans 263 residues: Esterase mokD (263 aa).

Active-site charge relay system residues include Ser134, Asp208, and His236.

It belongs to the LovG family.

It catalyses the reaction dihydromonacolin L-[lovastatin nonaketide synthase] + H2O = holo-[lovastatin nonaketide synthase] + dihydromonacolin L carboxylate + H(+). It functions in the pathway polyketide biosynthesis; lovastatin biosynthesis. Esterase; part of the gene cluster that mediates the biosynthesis of monakolin K, also known as lovastatin, and which acts as a potent competitive inhibitor of HMG-CoA reductase. Monakolin K biosynthesis is performed in two stages. The first stage is catalyzed by the nonaketide synthase mokA, which belongs to type I polyketide synthases and catalyzes the iterative nine-step formation of the polyketide. This PKS stage completed by the action of dehydrogenase mokE, which catalyzes the NADPH-dependent reduction of the unsaturated tetra-, penta- and heptaketide intermediates that arise during the mokA-mediated biosynthesis of the nonaketide chain and leads to dihydromonacolin L. Covalently bound dihydromonacolin L is released from mokA by the mokD esterase. Conversion of dihydromonacolin L into monacolin L and then monacolin J is subsequently performed with the participation of molecular oxygen and P450 monoogygenase mokC. Finally, mokF performs the conversion of monacoline J to monacoline K through the addition of the side-chain diketide moiety (2R)-2-methylbutanoate produced by the diketide synthase mokB. The protein is Esterase mokD of Monascus pilosus (Red mold).